A 91-amino-acid polypeptide reads, in one-letter code: Large ribosomal subunit protein bL31 (91 aa).

The interval 62 to 91 (RRKYSGTKPQQTAKGKKAAPKSTPKTNKKG) is disordered.

It belongs to the bacterial ribosomal protein bL31 family. Type A subfamily. As to quaternary structure, part of the 50S ribosomal subunit.

Binds the 23S rRNA. The protein is Large ribosomal subunit protein bL31 of Thermosynechococcus vestitus (strain NIES-2133 / IAM M-273 / BP-1).